We begin with the raw amino-acid sequence, 277 residues long: Energy-coupling factor transporter transmembrane protein EcfT (277 aa).

Transmembrane regions (helical) follow at residues 39-59, 61-81, 85-105, 121-141, 163-183, and 254-274; these read ITIL…YAII, FFCF…WNGV, IGLI…GHVF, AIYI…MTVT, VPVD…PTLF, and SKYD…LLIF.

Belongs to the energy-coupling factor EcfT family. In terms of assembly, forms a stable energy-coupling factor (ECF) transporter complex composed of 2 membrane-embedded substrate-binding proteins (S component), 2 ATP-binding proteins (A component) and 2 transmembrane proteins (T component). May be able to interact with more than 1 S component at a time.

The protein localises to the cell membrane. Functionally, transmembrane (T) component of an energy-coupling factor (ECF) ABC-transporter complex. Unlike classic ABC transporters this ECF transporter provides the energy necessary to transport a number of different substrates. The chain is Energy-coupling factor transporter transmembrane protein EcfT from Lactobacillus helveticus (strain DPC 4571).